Reading from the N-terminus, the 291-residue chain is Hydroxysteroid 11-beta-dehydrogenase 1-like protein B (291 aa).

An N-terminal signal peptide occupies residues 1 to 17 (MAGVILLLLSLCVGYIA). NADP(+) contacts are provided by residues 40 to 66 (GSSTGLGEQIAYEFARMGAHIMITARR), 91 to 92 (DM), and 118 to 120 (NHI). Ser170 contacts substrate. Tyr183 functions as the Proton acceptor in the catalytic mechanism. NADP(+) is bound by residues 183–187 (YCASK) and 216–222 (GYIDTEN).

Belongs to the short-chain dehydrogenases/reductases (SDR) family.

The protein resides in the secreted. The catalysed reaction is cortisone + NADPH + H(+) = cortisol + NADP(+). Functionally, unidirectional NADP(+)-dependent cortisol dehydrogenase (in vitro). This Xenopus laevis (African clawed frog) protein is Hydroxysteroid 11-beta-dehydrogenase 1-like protein B (hsd11b1l-b).